A 436-amino-acid polypeptide reads, in one-letter code: Cytochrome b5-related protein (436 aa).

Residues 16–100 (PTYRNSALIT…IAKYKVRDAA (85 aa)) form the Cytochrome b5 heme-binding domain. Positions 59 and 82 each coordinate heme.

Muscle.

May play a role in muscle cell metabolism. This Drosophila melanogaster (Fruit fly) protein is Cytochrome b5-related protein (Cyt-b5-r).